Consider the following 532-residue polypeptide: Telomerase Cajal body protein 1 (532 aa).

The tract at residues 1-53 (MKTSEERLLAPDSLPPDLAPAPVPQGSPAEKNTDFEPVPPPCGGDDQPQLATD) is disordered. The span at 13-25 (SLPPDLAPAPVPQ) shows a compositional bias: pro residues. Phosphoserine is present on residues serine 27, serine 61, and serine 83. Residues 80 to 122 (SELSPGIEEQDVSEHASLPGEETNLPELESGEATEGVSEERAE) form a disordered region. WD repeat units follow at residues 151–190 (RSEN…YSEQ), 206–251 (EGDT…LRAS), 256–297 (NHLD…RDCE), 307–348 (GQSG…ALLG), 349–389 (GHQG…HLLW), and 395–434 (VTTN…SDDS). Threonine 474 carries the phosphothreonine modification. Position 476 is a phosphoserine (serine 476). The tract at residues 510-532 (DPSSPVDDQDEKGQRRTEAVGMS) is disordered. Over residues 520 to 532 (EKGQRRTEAVGMS) the composition is skewed to basic and acidic residues.

It belongs to the TCAB1 family. Component of the telomerase holoenzyme complex composed of one molecule of TERT, one molecule of WRAP53/TCAB1, two molecules of H/ACA ribonucleoprotein complex subunits DKC1, NOP10, NHP2 and GAR1, and a telomerase RNA template component (TERC). The telomerase holoenzyme complex is associated with TEP1, SMG6/EST1A and POT1. Interacts with the chaperonin-containing T-complex (TRiC) complex; which mediates the folding of WRAP53/TCAB1. Interacts with COIL. Interacts with SMN1. Interacts with RNF8. Interacts with histone H2AX. Post-translationally, phosphorylated at Ser-61 by ATM in response to DNA damage, promoting its interaction with histone H2AX and localization to sites of DNA double-strand breaks.

Its subcellular location is the nucleus. The protein localises to the cajal body. It is found in the chromosome. The protein resides in the telomere. RNA chaperone that plays a key role in telomere maintenance and RNA localization to Cajal bodies. Specifically recognizes and binds the Cajal body box (CAB box) present in both small Cajal body RNAs (scaRNAs) and telomerase RNA template component (TERC). Essential component of the telomerase holoenzyme complex, a ribonucleoprotein complex essential for the replication of chromosome termini that elongates telomeres in most eukaryotes. In the telomerase holoenzyme complex, required to stimulate the catalytic activity of the complex. Acts by specifically binding the CAB box of the TERC RNA and controlling the folding of the CR4/CR5 region of the TERC RNA, a critical step for telomerase activity. In addition, also controls telomerase holoenzyme complex localization to Cajal body. During S phase, required for delivery of TERC to telomeres during S phase and for telomerase activity. In addition to its role in telomere maintenance, also required for Cajal body formation, probably by mediating localization of scaRNAs to Cajal bodies. Also plays a role in DNA repair: phosphorylated by ATM in response to DNA damage and relocalizes to sites of DNA double-strand breaks to promote the repair of DNA double-strand breaks. Acts by recruiting the ubiquitin ligase RNF8 to DNA breaks and promote both homologous recombination (HR) and non-homologous end joining (NHEJ). This is Telomerase Cajal body protein 1 from Mus musculus (Mouse).